The primary structure comprises 72 residues: Alpha-mammal toxin Bot3 (72 aa).

A signal peptide spans 1-8; it reads LVMAGVES. Residues 10–72 enclose the LCN-type CS-alpha/beta domain; it reads KDGYIVDDRN…VRTKGPGRCN (63 aa). 4 disulfides stabilise this stretch: cysteine 20–cysteine 71, cysteine 24–cysteine 44, cysteine 30–cysteine 54, and cysteine 34–cysteine 56. Asparagine 72 is subject to Asparagine amide.

The protein belongs to the long (4 C-C) scorpion toxin superfamily. Sodium channel inhibitor family. Alpha subfamily. Post-translationally, when the toxin is not amidated, there are 75% loss of toxicity to mice, and total incapacity to bind rat brain synaptosomes. In terms of tissue distribution, expressed by the venom gland.

It localises to the secreted. Functionally, alpha toxins bind voltage-independently at site-3 of sodium channels (Nav) and inhibit the inactivation of the activated channels, thereby blocking neuronal transmission. Is active against mammals and binds with high affinity to rat brain synaptosomes. This Buthus occitanus tunetanus (Common European scorpion) protein is Alpha-mammal toxin Bot3.